The sequence spans 396 residues: Putative nickel insertion protein (396 aa).

Positions 333–355 (RSKLARESQTVETPDGPAKGKTV) are disordered.

It belongs to the LarC family.

This Rhodopirellula baltica (strain DSM 10527 / NCIMB 13988 / SH1) protein is Putative nickel insertion protein.